Here is an 83-residue protein sequence, read N- to C-terminus: uncharacterized protein (83 aa).

This sequence belongs to the chlamydial CPn_0711/CT_665/TC_0036 family.

This is an uncharacterized protein from Chlamydia trachomatis serovar D (strain ATCC VR-885 / DSM 19411 / UW-3/Cx).